Reading from the N-terminus, the 153-residue chain is Troponin C (153 aa).

The residue at position 1 (A1) is a Blocked amino end (Ala). EF-hand domains lie at 10–45, 46–81, 86–121, and 122–153; these read EQVQ…LGQT, FEEK…FLVE, AMQE…LDDK, and LTED…MMTG. Ca(2+) is bound by residues D59, D61, S63, E65, E70, D99, D110, D135, D137, S139, T141, and E146.

This sequence belongs to the troponin C family.

Functionally, troponin is the central regulatory protein of striated muscle contraction. Tn consists of three components: Tn-I which is the inhibitor of actomyosin ATPase, Tn-T which contains the binding site for tropomyosin and Tn-C. The binding of calcium to Tn-C abolishes the inhibitory action of Tn on actin filaments. This is Troponin C from Tachypleus tridentatus (Japanese horseshoe crab).